The primary structure comprises 328 residues: MSAFDRIGVVGAGAWGTALANVAARAGRAVKLWSRDPAQVAEMAARRENARGLPGIALEAGVTPTADLREAAACEAVLLVVPAQVCRAVSGELAPLLAAGTPLVSCAKGIERGTAAFMTDVIRAAAPAARPMVLSGPSFADDVARGLPTAVTLAGEDGALAETLAAALGSSTFRLYHSSDVRGVEIGGAAKNVLAIAAGIVAGRRLGASAGAALTARGFAELQRFGRAFGAQPDTLTGLSGLGDLILTAGGPQSRNFAFGLALGQTGEVPQGGKLAEGAFTASALVAMAAGRGVEMPICAAVDAVLSGRLSVDGAIEALMARPQRAEA.

Residues Trp15, Arg35, and Lys108 each coordinate NADPH. The sn-glycerol 3-phosphate site is built by Lys108, Gly136, and Ser138. Ala140 is a binding site for NADPH. Residues Lys191, Asp244, Ser254, Arg255, and Asn256 each coordinate sn-glycerol 3-phosphate. Lys191 (proton acceptor) is an active-site residue. NADPH is bound at residue Arg255. Residues Leu275 and Glu277 each coordinate NADPH.

It belongs to the NAD-dependent glycerol-3-phosphate dehydrogenase family.

Its subcellular location is the cytoplasm. The catalysed reaction is sn-glycerol 3-phosphate + NAD(+) = dihydroxyacetone phosphate + NADH + H(+). It catalyses the reaction sn-glycerol 3-phosphate + NADP(+) = dihydroxyacetone phosphate + NADPH + H(+). It participates in membrane lipid metabolism; glycerophospholipid metabolism. Catalyzes the reduction of the glycolytic intermediate dihydroxyacetone phosphate (DHAP) to sn-glycerol 3-phosphate (G3P), the key precursor for phospholipid synthesis. The polypeptide is Glycerol-3-phosphate dehydrogenase [NAD(P)+] (Azorhizobium caulinodans (strain ATCC 43989 / DSM 5975 / JCM 20966 / LMG 6465 / NBRC 14845 / NCIMB 13405 / ORS 571)).